A 406-amino-acid chain; its full sequence is Copper transport protein CTR1 (406 aa).

At 1–152 the chain is on the cytoplasmic side; it reads MEGMNMGSSM…HHLHANNSGK (152 aa). 3 tandem repeats follow at residues 9 to 27, 28 to 46, and 47 to 65. The 3 X 19 AA tandem repeats of S-M-X-M-X-A-M-S-S-A-S-K-T-X-X-S-X-M-X stretch occupies residues 9–65; the sequence is SMNMDAMSSASKTVASSMASMSMDAMSSASKTILSSMSSMSMEAMSSASKTLASTMS. Positions 71–117 are disordered; that stretch reads SMGSSSMSGMSMSMSSTPTSSASAQTTSDSSMSGMSGMSSSDNSSSS. The chain crosses the membrane as a helical span at residues 153–173; sequence AFGIFLLFVVAAFVYKLLLFV. Over 174–250 the chain is Extracellular; that stretch reads SWCLEVHWFK…RAFLVFTSTM (77 aa). A helical transmembrane segment spans residues 251 to 271; the sequence is IIYMLMLATMSFVLTYVFAVI. Topologically, residues 272–406 are cytoplasmic; it reads TGLALSEVFF…LLPAEKFTHN (135 aa). The REP-III signature appears at 304–315; sequence CPGFGNCQCGRH. The interval 318 to 406 is disordered; the sequence is PSPDPIAVAD…LLPAEKFTHN (89 aa). Position 344 is a phosphoserine (serine 344). Residue lysine 345 forms a Glycyl lysine isopeptide (Lys-Gly) (interchain with G-Cter in ubiquitin) linkage. Serine 349 bears the Phosphoserine mark. Composition is skewed to polar residues over residues 349–375 and 384–395; these read SENNQKKTPTQEEGCNCATDSGKNQAN and SKLQEQSGNMDQ. Phosphothreonine is present on threonine 356. Serine 369 is subject to Phosphoserine.

Homooligomer. In terms of processing, extensively O-glycosylated.

The protein localises to the cell membrane. The enzyme catalyses Cu(2+)(in) = Cu(2+)(out). High-affinity copper transporter of plasma membrane that mediates copper uptake under low copper conditions. Copper transport through the high affinity system requiring CTRl supplies the iron transport multicopper ferroxidase FET3 with copper, which in turn is required for ferrous iron uptake. The energy for translocation is unlikely to be directly derived from ATP hydrolysis and the exact mechanism driving the transmembrane transport of copper has still to be determined. Binds 4 copper ions via its C-terminal cystein-rich domain and is able to deliver Cu(I) directly to both the chaperone ATX1 and to an N-terminal domain of the CCC2 protein. Also able to mediate the uptake of the anticancer drug cisplatin. This chain is Copper transport protein CTR1, found in Saccharomyces cerevisiae (strain ATCC 204508 / S288c) (Baker's yeast).